Consider the following 264-residue polypeptide: CD320 antigen (264 aa).

A signal peptide spans Met1–Ala28. One can recognise an LDL-receptor class A 1 domain in the interval Ser50–Arg87. Intrachain disulfides connect Cys51/Cys64, Cys58/Cys77, and Cys71/Cys86. 6 residues coordinate Ca(2+): Trp69, Asp72, Asp74, Asp76, Asp82, and Glu83. The N-linked (GlcNAc...) asparagine glycan is linked to Asn122. An LDL-receptor class A 2 domain is found at Pro127 to Asp164. 3 disulfides stabilise this stretch: Cys128–Cys141, Cys135–Cys154, and Cys148–Cys163. Residues Trp146, Asp149, His151, Asp153, Asp159, and Glu160 each contribute to the Ca(2+) site. Asn195 is a glycosylation site (N-linked (GlcNAc...) asparagine). The chain crosses the membrane as a helical span at residues Val213 to Leu233.

Interacts (via LDL-receptor class A domains) with TCN2.

Its subcellular location is the cell membrane. In terms of biological role, receptor for transcobalamin saturated with cobalamin (TCbl). Plays an important role in cobalamin uptake. Plasma membrane protein that is expressed on follicular dendritic cells (FDC) and mediates interaction with germinal center B cells. Functions as a costimulator to promote B cell responses to antigenic stimuli; promotes B cell differentiation and proliferation. Germinal center-B (GC-B) cells differentiate into memory B-cells and plasma cells (PC) through interaction with T-cells and follicular dendritic cells (FDC). CD320 augments the proliferation of PC precursors generated by IL-10. The polypeptide is CD320 antigen (Cd320) (Rattus norvegicus (Rat)).